The chain runs to 367 residues: Phosphoribosylaminoimidazole-succinocarboxamide synthase (367 aa).

It belongs to the SAICAR synthetase family.

The enzyme catalyses 5-amino-1-(5-phospho-D-ribosyl)imidazole-4-carboxylate + L-aspartate + ATP = (2S)-2-[5-amino-1-(5-phospho-beta-D-ribosyl)imidazole-4-carboxamido]succinate + ADP + phosphate + 2 H(+). The protein operates within purine metabolism; IMP biosynthesis via de novo pathway; 5-amino-1-(5-phospho-D-ribosyl)imidazole-4-carboxamide from 5-amino-1-(5-phospho-D-ribosyl)imidazole-4-carboxylate: step 1/2. This is Phosphoribosylaminoimidazole-succinocarboxamide synthase from Shewanella piezotolerans (strain WP3 / JCM 13877).